Here is a 173-residue protein sequence, read N- to C-terminus: Protein PLASTID REDOX INSENSITIVE 2, chloroplastic (173 aa).

A chloroplast-targeting transit peptide spans 1–55; the sequence is MATRAWVAAAVALNPQLLPLRSCSPTKSVSPAQRSASMGLRLRSGRPCLGKFVCR.

It is found in the plastid. The protein localises to the chloroplast stroma. The protein resides in the chloroplast nucleoid. Its function is as follows. Required for the activity of the plastid-encoded RNA polymerase (PEP) and full expression of genes transcribed by PEP. The sequence is that of Protein PLASTID REDOX INSENSITIVE 2, chloroplastic from Zea mays (Maize).